Reading from the N-terminus, the 842-residue chain is Leucine--tRNA ligase (842 aa).

A 'HIGH' region motif is present at residues 44–55 (PYPSANGLHVGH). Residues 619 to 623 (KMSKS) carry the 'KMSKS' region motif. Residue Lys-622 coordinates ATP.

The protein belongs to the class-I aminoacyl-tRNA synthetase family.

It is found in the cytoplasm. It carries out the reaction tRNA(Leu) + L-leucine + ATP = L-leucyl-tRNA(Leu) + AMP + diphosphate. This Borrelia hermsii (strain HS1 / DAH) protein is Leucine--tRNA ligase.